The sequence spans 337 residues: Probable poly [ADP-ribose] polymerase DDB_G0278045 (337 aa).

One can recognise a PARP catalytic domain in the interval 21–231; it reads KKWDIIYKQR…NNNKNKNKNN (211 aa). Low complexity predominate over residues 218–242; the sequence is NNTNNNNKNKNKNNNKNNNKNIKIQ. Residues 218–247 form a disordered region; sequence NNTNNNNKNKNKNNNKNNNKNIKIQNENKN.

The enzyme catalyses L-aspartyl-[protein] + NAD(+) = 4-O-(ADP-D-ribosyl)-L-aspartyl-[protein] + nicotinamide. The catalysed reaction is L-glutamyl-[protein] + NAD(+) = 5-O-(ADP-D-ribosyl)-L-glutamyl-[protein] + nicotinamide. It carries out the reaction NAD(+) + (ADP-D-ribosyl)n-acceptor = nicotinamide + (ADP-D-ribosyl)n+1-acceptor + H(+).. The sequence is that of Probable poly [ADP-ribose] polymerase DDB_G0278045 from Dictyostelium discoideum (Social amoeba).